A 229-amino-acid polypeptide reads, in one-letter code: Large ribosomal subunit protein uL1 (229 aa).

Belongs to the universal ribosomal protein uL1 family. As to quaternary structure, part of the 50S ribosomal subunit.

Functionally, binds directly to 23S rRNA. The L1 stalk is quite mobile in the ribosome, and is involved in E site tRNA release. Protein L1 is also a translational repressor protein, it controls the translation of the L11 operon by binding to its mRNA. This Flavobacterium psychrophilum (strain ATCC 49511 / DSM 21280 / CIP 103535 / JIP02/86) protein is Large ribosomal subunit protein uL1.